The chain runs to 381 residues: GDP-mannose-dependent alpha-(1-6)-phosphatidylinositol dimannoside mannosyltransferase (381 aa).

Residues G16, R207, 211 to 212 (EK), 283 to 287 (ETFGL), and E291 each bind substrate.

The protein belongs to the glycosyltransferase group 1 family. Glycosyltransferase 4 subfamily.

It participates in phospholipid metabolism; phosphatidylinositol metabolism. Functionally, catalyzes the addition of a mannose residue from GDP-D-mannose to the position 6 of the alpha-1,6-linked mannose residue of the triacyl phosphatidylinositol dimannoside (Ac3PIM2) to generate triacyl phosphatidylinositol trimannoside (Ac3PIM3). This Mycobacterium tuberculosis (strain ATCC 25177 / H37Ra) protein is GDP-mannose-dependent alpha-(1-6)-phosphatidylinositol dimannoside mannosyltransferase (pimC).